The primary structure comprises 116 residues: Large ribosomal subunit protein bL17 (116 aa).

The protein belongs to the bacterial ribosomal protein bL17 family. In terms of assembly, part of the 50S ribosomal subunit. Contacts protein L32.

The polypeptide is Large ribosomal subunit protein bL17 (Prochlorococcus marinus subsp. pastoris (strain CCMP1986 / NIES-2087 / MED4)).